Here is a 578-residue protein sequence, read N- to C-terminus: Arginine--tRNA ligase (578 aa).

Residues 125–135 (PNVAKKMHVGH) carry the 'HIGH' region motif.

The protein belongs to the class-I aminoacyl-tRNA synthetase family. Monomer.

The protein resides in the cytoplasm. It carries out the reaction tRNA(Arg) + L-arginine + ATP = L-arginyl-tRNA(Arg) + AMP + diphosphate. The sequence is that of Arginine--tRNA ligase from Buchnera aphidicola subsp. Baizongia pistaciae (strain Bp).